We begin with the raw amino-acid sequence, 169 residues long: uncharacterized protein (169 aa).

This is an uncharacterized protein from Haemophilus influenzae (strain ATCC 51907 / DSM 11121 / KW20 / Rd).